A 105-amino-acid chain; its full sequence is Cell division protein FtsB (105 aa).

Over 1–3 the chain is Cytoplasmic; the sequence is MGK. Residues 4-21 traverse the membrane as a helical segment; that stretch reads LTLLLLVLLGWLQYSLWL. Residues 22 to 105 are Periplasmic-facing; sequence GKNGVHDLVR…PAAPATQDNQ (84 aa). Positions 28–62 form a coiled coil; the sequence is DLVRVESDVAAQQSNNAQLKARNDQLFAEIDDLNG.

The protein belongs to the FtsB family. In terms of assembly, part of a complex composed of FtsB, FtsL and FtsQ.

Its subcellular location is the cell inner membrane. Essential cell division protein. May link together the upstream cell division proteins, which are predominantly cytoplasmic, with the downstream cell division proteins, which are predominantly periplasmic. This chain is Cell division protein FtsB, found in Sodalis glossinidius (strain morsitans).